We begin with the raw amino-acid sequence, 520 residues long: Versicolorin B desaturase (520 aa).

A helical membrane pass occupies residues 22–42; the sequence is IFTTILSIFGIALSAVAAWGI. Asparagine 266 and asparagine 426 each carry an N-linked (GlcNAc...) asparagine glycan. Cysteine 462 serves as a coordination point for heme.

Belongs to the cytochrome P450 family. It depends on heme as a cofactor.

The protein resides in the membrane. It carries out the reaction versicolorin B + NADPH + O2 + H(+) = versicolorin A + NADP(+) + 2 H2O. It functions in the pathway mycotoxin biosynthesis. Functionally, versicolorin B desaturase; part of the fragmented gene cluster that mediates the biosynthesis of dothistromin (DOTH), a polyketide toxin very similar in structure to the aflatoxin precursor, versicolorin B. The first step of the pathway is the conversion of acetate to norsolorinic acid (NOR) and requires the fatty acid synthase subunits hexA and hexB, as well as the polyketide synthase pksA. PksA combines a hexanoyl starter unit and 7 malonyl-CoA extender units to synthesize the precursor NOR. The hexanoyl starter unit is provided to the acyl-carrier protein (ACP) domain by the fungal fatty acid synthase hexA/hexB. The second step is the conversion of NOR to averantin (AVN) and requires the norsolorinic acid ketoreductase nor1, which catalyzes the dehydration of norsolorinic acid to form (1'S)-averantin. The cytochrome P450 monooxygenase avnA then catalyzes the hydroxylation of AVN to 5'hydroxyaverantin (HAVN). The next step is performed by adhA that transforms HAVN to averufin (AVF). Averufin might then be converted to hydroxyversicolorone by cypX and avfA. Hydroxyversicolorone is further converted versiconal hemiacetal acetate (VHA) by moxY. VHA is then the substrate for the versiconal hemiacetal acetate esterase est1 to yield versiconal (VAL). Versicolorin B synthase vbsA then converts VAL to versicolorin B (VERB) by closing the bisfuran ring. Then, the activity of the versicolorin B desaturase verB leads to versicolorin A (VERA). DotB, a predicted chloroperoxidase, may perform epoxidation of the A-ring of VERA. Alternatively, a cytochrome P450, such as cypX or avnA could catalyze this step. It is also possible that another, uncharacterized, cytochrome P450 enzyme is responsible for this step. Opening of the epoxide could potentially be achieved by the epoxide hydrolase epoA. However, epoA seems not to be required for DOTH biosynthesis, but other epoxide hydrolases may have the ability to complement this hydrolysis. Alternatively, opening of the epoxide ring could be achieved non-enzymatically. The next step is the deoxygenation of ring A to yield the 5,8-dihydroxyanthraquinone which is most likely catalyzed by the NADPH dehydrogenase encoded by ver1. The last stages of DOTH biosynthesis are proposed to involve hydroxylation of the bisfuran. OrdB and norB might have oxidative roles here. An alternative possibility is that cytochrome P450 monoogenases such as avnA and cypX might perform these steps in addition to previously proposed steps. This Dothistroma septosporum (strain NZE10 / CBS 128990) (Red band needle blight fungus) protein is Versicolorin B desaturase.